A 65-amino-acid chain; its full sequence is UPF0434 protein BBta_0300 (65 aa).

It belongs to the UPF0434 family.

In Bradyrhizobium sp. (strain BTAi1 / ATCC BAA-1182), this protein is UPF0434 protein BBta_0300.